A 91-amino-acid chain; its full sequence is Early E3B 10.4 kDa protein (91 aa).

The N-terminal stretch at 1-22 is a signal peptide; it reads MIPRVLILLTLVALFCACSTLA. Topologically, residues 23–34 are lumenal; sequence AVAHIEVDCIPP. Residues 35–60 traverse the membrane as a helical segment; it reads FTVYLLYGFVTLILICSLVTVVIAFI. The Cytoplasmic portion of the chain corresponds to 61–91; the sequence is QFIDWICVRIAYLRHHPQYRDRTIADLLRIL.

Belongs to the adenoviridae E3B family.

The protein resides in the host endoplasmic reticulum membrane. Its function is as follows. Down-regulates the EGF receptor. This chain is Early E3B 10.4 kDa protein, found in Homo sapiens (Human).